A 414-amino-acid chain; its full sequence is Cytochrome b (414 aa).

2 helical membrane-spanning segments follow: residues 40-60 (FFGS…VWLA) and 84-104 (GWLI…VIYL). Heme b contacts are provided by His91 and His105. Transmembrane regions (helical) follow at residues 121-141 (LLWM…FFGY), 154-174 (QVIV…SVWV), 188-208 (FFAF…LHIV), 252-272 (LMGV…NPTM), 294-314 (IAPV…PPMY), 317-337 (QFPG…LPWL), 351-371 (IFKW…WLGI), and 378-398 (YTLL…LMPI). Residues His192 and His206 each contribute to the heme b site.

Belongs to the cytochrome b family. As to quaternary structure, the main subunits of complex b-c1 are: cytochrome b, cytochrome c1 and the Rieske protein. It depends on heme b as a cofactor.

Its subcellular location is the cell membrane. In terms of biological role, component of the ubiquinol-cytochrome c reductase complex (complex III or cytochrome b-c1 complex), which is a respiratory chain that generates an electrochemical potential coupled to ATP synthesis. This is Cytochrome b (petB) from Allochromatium vinosum (strain ATCC 17899 / DSM 180 / NBRC 103801 / NCIMB 10441 / D) (Chromatium vinosum).